Here is a 176-residue protein sequence, read N- to C-terminus: Immunity factor for TNT homolog (176 aa).

In terms of assembly, interacts with the tuberculosis necrotizing toxin (TNT) homolog, the C-terminal domain of the outer membrane channel protein CpnT.

Its function is as follows. Antitoxin for tuberculosis necrotizing toxin (TNT) homolog. Acts by binding directly to TNT, which inhibits NAD(+) glycohydrolase activity of TNT and protects M.bovis from self-poisoning. The sequence is that of Immunity factor for TNT homolog from Mycobacterium bovis (strain BCG / Pasteur 1173P2).